Consider the following 386-residue polypeptide: tRNA N6-adenosine threonylcarbamoyltransferase (386 aa).

His141, His145, and Tyr162 together coordinate a divalent metal cation. Residues 162–166 (YVSGG), Asp194, Gly209, Glu213, and Asn315 each bind substrate. Asp344 contacts a divalent metal cation.

The protein belongs to the KAE1 / TsaD family. As to quaternary structure, component of the EKC/KEOPS complex composed of at least BUD32, CGI121, GON7, KAE1 and PCC1; the whole complex dimerizes. A divalent metal cation serves as cofactor.

The protein localises to the cytoplasm. The protein resides in the nucleus. It carries out the reaction L-threonylcarbamoyladenylate + adenosine(37) in tRNA = N(6)-L-threonylcarbamoyladenosine(37) in tRNA + AMP + H(+). Functionally, component of the EKC/KEOPS complex that is required for the formation of a threonylcarbamoyl group on adenosine at position 37 (t(6)A37) in tRNAs that read codons beginning with adenine. The complex is probably involved in the transfer of the threonylcarbamoyl moiety of threonylcarbamoyl-AMP (TC-AMP) to the N6 group of A37. KAE1 likely plays a direct catalytic role in this reaction, but requires other protein(s) of the complex to fulfill this activity. The EKC/KEOPS complex also promotes both telomere uncapping and telomere elongation. The complex is required for efficient recruitment of transcriptional coactivators. In Saccharomyces cerevisiae (strain ATCC 204508 / S288c) (Baker's yeast), this protein is tRNA N6-adenosine threonylcarbamoyltransferase.